A 385-amino-acid chain; its full sequence is Putative glutamate--cysteine ligase 2 (385 aa).

The protein belongs to the glutamate--cysteine ligase type 2 family. YbdK subfamily.

The catalysed reaction is L-cysteine + L-glutamate + ATP = gamma-L-glutamyl-L-cysteine + ADP + phosphate + H(+). ATP-dependent carboxylate-amine ligase which exhibits weak glutamate--cysteine ligase activity. The polypeptide is Putative glutamate--cysteine ligase 2 (Herpetosiphon aurantiacus (strain ATCC 23779 / DSM 785 / 114-95)).